The chain runs to 262 residues: Tryptophan synthase alpha chain (262 aa).

Active-site proton acceptor residues include Glu-48 and Asp-59.

It belongs to the TrpA family. In terms of assembly, tetramer of two alpha and two beta chains.

It catalyses the reaction (1S,2R)-1-C-(indol-3-yl)glycerol 3-phosphate + L-serine = D-glyceraldehyde 3-phosphate + L-tryptophan + H2O. It functions in the pathway amino-acid biosynthesis; L-tryptophan biosynthesis; L-tryptophan from chorismate: step 5/5. The alpha subunit is responsible for the aldol cleavage of indoleglycerol phosphate to indole and glyceraldehyde 3-phosphate. The protein is Tryptophan synthase alpha chain of Helicobacter pylori (strain Shi470).